Here is a 320-residue protein sequence, read N- to C-terminus: Glutaconate CoA-transferase subunit A (320 aa).

Belongs to the 3-oxoacid CoA-transferase subunit A family. In terms of assembly, heterooctamer of four A and four B subunits.

The protein localises to the cytoplasm. It catalyses the reaction trans-glutaconate + acetyl-CoA = (2E)-glutaconyl-CoA + acetate. It participates in amino-acid degradation; L-glutamate degradation via hydroxyglutarate pathway; crotonoyl-CoA from L-glutamate: step 3/5. Its function is as follows. Catalyzes the transfer of the CoA moiety from acetyl-CoA to (R)-2-hydroxyglutarate and related compounds like glutaconate. The chain is Glutaconate CoA-transferase subunit A (gctA) from Acidaminococcus fermentans (strain ATCC 25085 / DSM 20731 / CCUG 9996 / CIP 106432 / VR4).